We begin with the raw amino-acid sequence, 225 residues long: Large ribosomal subunit protein uL1 (225 aa).

Belongs to the universal ribosomal protein uL1 family. Part of the 50S ribosomal subunit.

In terms of biological role, binds directly to 23S rRNA. Probably involved in E site tRNA release. Its function is as follows. Protein L1 is also a translational repressor protein, it controls the translation of its operon by binding to its mRNA. The chain is Large ribosomal subunit protein uL1 from Thermofilum pendens (strain DSM 2475 / Hrk 5).